Reading from the N-terminus, the 360-residue chain is Phospho-N-acetylmuramoyl-pentapeptide-transferase (360 aa).

Transmembrane regions (helical) follow at residues 25–45, 73–93, 97–117, 128–148, 168–188, 199–219, 236–256, 262–282, 288–308, and 338–358; these read RAILSVLTALVLSLWLGPTLI, TMGGVLILAAVLGSSLLWADL, YVWVVLLVTTGFGIVGFVDDY, LIAKWKYFWQSVIASVAAVYL, VMPQLGMLYMLMAYFVIVGTS, GLAIMPTIMVAAALGIFAYVS, TAELLVVCTAIVGAGLGFLWF, LVFMGDVGSLALGAALGIIAI, LVLFIMGGVFVMETLSVMLQV, and VIVRFWILSLIFVLIGLATLK.

This sequence belongs to the glycosyltransferase 4 family. MraY subfamily. Requires Mg(2+) as cofactor.

It is found in the cell inner membrane. The catalysed reaction is UDP-N-acetyl-alpha-D-muramoyl-L-alanyl-gamma-D-glutamyl-meso-2,6-diaminopimeloyl-D-alanyl-D-alanine + di-trans,octa-cis-undecaprenyl phosphate = di-trans,octa-cis-undecaprenyl diphospho-N-acetyl-alpha-D-muramoyl-L-alanyl-D-glutamyl-meso-2,6-diaminopimeloyl-D-alanyl-D-alanine + UMP. It participates in cell wall biogenesis; peptidoglycan biosynthesis. Catalyzes the initial step of the lipid cycle reactions in the biosynthesis of the cell wall peptidoglycan: transfers peptidoglycan precursor phospho-MurNAc-pentapeptide from UDP-MurNAc-pentapeptide onto the lipid carrier undecaprenyl phosphate, yielding undecaprenyl-pyrophosphoryl-MurNAc-pentapeptide, known as lipid I. This Idiomarina loihiensis (strain ATCC BAA-735 / DSM 15497 / L2-TR) protein is Phospho-N-acetylmuramoyl-pentapeptide-transferase.